The chain runs to 303 residues: Nucleotide-binding protein Dvul_1502 (303 aa).

23-30 (GLSGAGKS) provides a ligand contact to ATP. Residue 75–78 (DLRE) participates in GTP binding.

The protein belongs to the RapZ-like family.

Functionally, displays ATPase and GTPase activities. In Nitratidesulfovibrio vulgaris (strain DP4) (Desulfovibrio vulgaris), this protein is Nucleotide-binding protein Dvul_1502.